We begin with the raw amino-acid sequence, 40 residues long: Large ribosomal subunit protein bL36B (40 aa).

This sequence belongs to the bacterial ribosomal protein bL36 family.

The protein is Large ribosomal subunit protein bL36B of Leifsonia xyli subsp. xyli (strain CTCB07).